The following is a 467-amino-acid chain: UDP-N-acetylmuramoylalanine--D-glutamate ligase (467 aa).

Position 118-124 (118-124 (GTNGKTT)) interacts with ATP.

This sequence belongs to the MurCDEF family.

It localises to the cytoplasm. The catalysed reaction is UDP-N-acetyl-alpha-D-muramoyl-L-alanine + D-glutamate + ATP = UDP-N-acetyl-alpha-D-muramoyl-L-alanyl-D-glutamate + ADP + phosphate + H(+). The protein operates within cell wall biogenesis; peptidoglycan biosynthesis. In terms of biological role, cell wall formation. Catalyzes the addition of glutamate to the nucleotide precursor UDP-N-acetylmuramoyl-L-alanine (UMA). This chain is UDP-N-acetylmuramoylalanine--D-glutamate ligase, found in Streptomyces avermitilis (strain ATCC 31267 / DSM 46492 / JCM 5070 / NBRC 14893 / NCIMB 12804 / NRRL 8165 / MA-4680).